The primary structure comprises 498 residues: Inosine-5'-monophosphate dehydrogenase (498 aa).

CBS domains are found at residues 98–155 (MVVN…EQKI) and 159–216 (MTRE…PHAS). Residues aspartate 253 and 303–305 (GIG) each bind NAD(+). 2 residues coordinate K(+): glycine 305 and glycine 307. IMP is bound at residue serine 308. Cysteine 310 contacts K(+). Catalysis depends on cysteine 310, which acts as the Thioimidate intermediate. Residues 343 to 345 (DGG), 366 to 367 (GS), and 390 to 394 (YRGMG) each bind IMP. Residue arginine 406 is the Proton acceptor of the active site. Glutamate 421 lines the IMP pocket. K(+)-binding residues include glutamate 475, serine 476, and histidine 477.

This sequence belongs to the IMPDH/GMPR family. Homotetramer. The cofactor is K(+).

It catalyses the reaction IMP + NAD(+) + H2O = XMP + NADH + H(+). Its pathway is purine metabolism; XMP biosynthesis via de novo pathway; XMP from IMP: step 1/1. Mycophenolic acid (MPA) is a non-competitive inhibitor that prevents formation of the closed enzyme conformation by binding to the same site as the amobile flap. In contrast, mizoribine monophosphate (MZP) is a competitive inhibitor that induces the closed conformation. MPA is a potent inhibitor of mammalian IMPDHs but a poor inhibitor of the bacterial enzymes. MZP is a more potent inhibitor of bacterial IMPDH. Catalyzes the conversion of inosine 5'-phosphate (IMP) to xanthosine 5'-phosphate (XMP), the first committed and rate-limiting step in the de novo synthesis of guanine nucleotides, and therefore plays an important role in the regulation of cell growth. This is Inosine-5'-monophosphate dehydrogenase from Rhizobium tropici.